A 608-amino-acid chain; its full sequence is Glutamine--fructose-6-phosphate aminotransferase [isomerizing] (608 aa).

The Nucleophile; for GATase activity role is filled by Cys-2. In terms of domain architecture, Glutamine amidotransferase type-2 spans 2–218 (CGICGIVGHQ…DGDWCELTPD (217 aa)). 2 SIS domains span residues 284-423 (MPFD…ARGT) and 456-598 (MAAV…VDQP). Lys-603 serves as the catalytic For Fru-6P isomerization activity.

As to quaternary structure, homodimer.

It is found in the cytoplasm. It carries out the reaction D-fructose 6-phosphate + L-glutamine = D-glucosamine 6-phosphate + L-glutamate. Functionally, catalyzes the first step in hexosamine metabolism, converting fructose-6P into glucosamine-6P using glutamine as a nitrogen source. This is Glutamine--fructose-6-phosphate aminotransferase [isomerizing] from Gluconobacter oxydans (strain 621H) (Gluconobacter suboxydans).